The chain runs to 306 residues: Pantothenate kinase (306 aa).

ATP is bound at residue 90-97 (GSVAVGKS).

Belongs to the prokaryotic pantothenate kinase family.

It is found in the cytoplasm. It catalyses the reaction (R)-pantothenate + ATP = (R)-4'-phosphopantothenate + ADP + H(+). Its pathway is cofactor biosynthesis; coenzyme A biosynthesis; CoA from (R)-pantothenate: step 1/5. The sequence is that of Pantothenate kinase from Listeria welshimeri serovar 6b (strain ATCC 35897 / DSM 20650 / CCUG 15529 / CIP 8149 / NCTC 11857 / SLCC 5334 / V8).